The chain runs to 550 residues: (+)-germacrene D synthase (550 aa).

Mg(2+) is bound by residues Asp304, Asp308, and Glu455. The DDXXD motif motif lies at 304-308 (DDIYD).

The protein belongs to the terpene synthase family. Tpsa subfamily. It depends on Mg(2+) as a cofactor. Mn(2+) is required as a cofactor. Co(2+) serves as cofactor. Requires Ni(2+) as cofactor.

The protein localises to the cytoplasm. The catalysed reaction is (2E,6E)-farnesyl diphosphate = (+)-germacrene D + diphosphate. It functions in the pathway secondary metabolite biosynthesis; terpenoid biosynthesis. In terms of biological role, involved in the biosynthesis of germacrene D. Can use farnesyl diphosphate as substrate, but not geranyl diphosphate. Produces mainly (+)-germacrene D along with germacrene B and a number of minor by-products. This chain is (+)-germacrene D synthase, found in Zingiber officinale (Ginger).